A 154-amino-acid polypeptide reads, in one-letter code: Superoxide dismutase [Cu-Zn] (154 aa).

His47, His49, and His64 together coordinate Cu cation. A disulfide bridge links Cys58 with Cys147. Residues His64, His72, His81, and Asp84 each coordinate Zn(2+). His121 is a Cu cation binding site. Positions 124–137 (TDDLGRGDSEESKK) are enriched in basic and acidic residues. The segment at 124 to 144 (TDDLGRGDSEESKKTGNAGAR) is disordered. Substrate is bound at residue Arg144.

This sequence belongs to the Cu-Zn superoxide dismutase family. In terms of assembly, homodimer. Cu cation is required as a cofactor. The cofactor is Zn(2+).

The protein resides in the cytoplasm. It catalyses the reaction 2 superoxide + 2 H(+) = H2O2 + O2. Its function is as follows. Destroys radicals which are normally produced within the cells and which are toxic to biological systems. This chain is Superoxide dismutase [Cu-Zn] (sodA), found in Emericella nidulans (strain FGSC A4 / ATCC 38163 / CBS 112.46 / NRRL 194 / M139) (Aspergillus nidulans).